A 601-amino-acid chain; its full sequence is MAGAAGPGTVPGAAGGDGDDSLYPIAVLIDELRNEDVQLRLNSIKKLSTIALALGVERTRTELLPFLTDTIYDEDEVLLALAEQLGNFTGLVGGPDFAHCLLPPLESLATVEETVVRDKAVESLRQISQEHTPVALEAHFVPLVKRLASGDWFTSRTSACGLFSVCYPRASNAVKAEIRQHFRSLCSDDTPMVRRAAASKLGEFAKVLELDSVKTEIVPLFTNLASDEQDSVRLLAVEACVSIAQLLSQDDLEALVMPTLRQAAEDKSWRVRYMVADKFSELQKAVGPKIALSDLIPAFQSLLRDCEAEVRAAAAHKVRELCENLPTEGRETVIMNQILPYIKELVSDTNQHVKSALASVIMGLSTVLGKENTIEHLLPLFLAQLKDECPEVRLNIISNLDCVNEVIGIRQLSQSLLPAIVELAEDAKWRVRLAIIEYMPLLAGQLGVEFFDEKLNSLCMAWLVDHVYAIREAATNNLMKLVQKFGTEWAQNTIVPKVLVMANDPNYLHRMTTLFCINALSEACGKEITTKQMLPIVLKMAGDQVANVRFNVAKSLQKIGPILDTNALQGEVKPVLQKLGQDEDMDVKYFAQEAISVLALA.

Residue A2 is modified to N-acetylalanine. HEAT repeat units follow at residues D20–R58, T59–D96, F97–A135, L136–A173, V174–S212, V213–D251, L252–I290, A291–V333, I334–N372, T373–Q411, L412–F450, F451–W489, A490–I528, T529–A567, and L568–A601.

The protein belongs to the phosphatase 2A regulatory subunit A family. As to quaternary structure, PP2A consists of a common heterodimeric core enzyme, composed of a 36 kDa catalytic subunit (subunit C) and a 65 kDa constant regulatory subunit (PR65 or subunit A), that associates with a variety of regulatory subunits. Proteins that associate with the core dimer include three families of regulatory subunits B (the R2/B/PR55/B55, R3/B''/PR72/PR130/PR59 and R5/B'/B56 families), the 48 kDa variable regulatory subunit, viral proteins, and cell signaling molecules. Interacts with IPO9. Interacts with SGO1. Interacts with RAF1.

Functionally, the PR65 subunit of protein phosphatase 2A serves as a scaffolding molecule to coordinate the assembly of the catalytic subunit and a variable regulatory B subunit. This chain is Serine/threonine-protein phosphatase 2A 65 kDa regulatory subunit A beta isoform (Ppp2r1b), found in Rattus norvegicus (Rat).